The chain runs to 378 residues: 23S rRNA (uracil(747)-C(5))-methyltransferase RlmC (378 aa).

[4Fe-4S] cluster is bound by residues Cys3, Cys11, Cys14, and Cys87. Residues Gln212, Phe241, Glu262, and Asn309 each coordinate S-adenosyl-L-methionine. The active-site Nucleophile is the Cys336.

Belongs to the class I-like SAM-binding methyltransferase superfamily. RNA M5U methyltransferase family. RlmC subfamily.

It catalyses the reaction uridine(747) in 23S rRNA + S-adenosyl-L-methionine = 5-methyluridine(747) in 23S rRNA + S-adenosyl-L-homocysteine + H(+). Functionally, catalyzes the formation of 5-methyl-uridine at position 747 (m5U747) in 23S rRNA. This is 23S rRNA (uracil(747)-C(5))-methyltransferase RlmC from Shewanella pealeana (strain ATCC 700345 / ANG-SQ1).